The primary structure comprises 817 residues: Fibroblast growth factor receptor 2 (817 aa).

The signal sequence occupies residues 1-22 (MFARGWLLGALLLMTLATVSVA). The Extracellular portion of the chain corresponds to 23–377 (RPSLKIDLVN…ETDYPPDYVE (355 aa)). Ig-like C2-type domains are found at residues 26 to 126 (LKID…VNVT), 159 to 247 (PEKM…YTLD), and 256 to 358 (PILQ…AWLT). N-linked (GlcNAc...) asparagine glycosylation is found at N32, N84, and N124. C63 and C108 are disulfide-bonded. A heparin-binding region spans residues 161–178 (KMEKKLHAVPAANTVKFR). A disulfide bond links C179 and C231. 5 N-linked (GlcNAc...) asparagine glycosylation sites follow: N228, N265, N297, N318, and N331. C278 and C342 are disulfide-bonded. The chain crosses the membrane as a helical span at residues 378 to 398 (IAIYCIGVFLIACMVVIVVVC). Residues 399–817 (RMRTSAKKPD…YQHINGGIKT (419 aa)) are Cytoplasmic-facing. The disordered stretch occupies residues 429–465 (TVSSDSSSSMSSSTPLVRITTRRSSAHDDPIPEYDLP). Over residues 431–441 (SSDSSSSMSSS) the composition is skewed to low complexity. At Y462 the chain carries Phosphotyrosine; by autocatalysis. The 290-residue stretch at 477–766 (LTLGKPLGEG…LTLATNEEYL (290 aa)) folds into the Protein kinase domain. Residues 483–491 (LGEGCFGQV), K513, 561–563 (EYA), and N567 contribute to the ATP site. The residue at position 582 (Y582) is a Phosphotyrosine; by autocatalysis. The Proton acceptor role is filled by D622. Phosphotyrosine; by autocatalysis is present on residues Y652, Y653, and Y765.

This sequence belongs to the protein kinase superfamily. Tyr protein kinase family. Fibroblast growth factor receptor subfamily. Monomer. Homodimer after ligand binding. Autophosphorylated. Binding of FGF family members together with heparan sulfate proteoglycan or heparin promotes receptor dimerization and autophosphorylation on tyrosine residues. Autophosphorylation occurs in trans between the two FGFR molecules present in the dimer. In terms of processing, N-glycosylated in the endoplasmic reticulum. The N-glycan chains undergo further maturation to an Endo H-resistant form in the Golgi apparatus. Post-translationally, ubiquitinated. FGFR2 is rapidly ubiquitinated after autophosphorylation, leading to internalization and degradation. Subject to degradation both in lysosomes and by the proteasome.

Its subcellular location is the cell membrane. The protein resides in the golgi apparatus. The protein localises to the cytoplasmic vesicle. It catalyses the reaction L-tyrosyl-[protein] + ATP = O-phospho-L-tyrosyl-[protein] + ADP + H(+). Its activity is regulated as follows. Present in an inactive conformation in the absence of bound ligand. Ligand binding leads to dimerization and activation by autophosphorylation on tyrosine residues. In terms of biological role, tyrosine-protein kinase that acts as a cell-surface receptor for fibroblast growth factors and plays an essential role in the regulation of cell proliferation, differentiation, migration and apoptosis, and in the regulation of embryonic development. Required for normal embryonic patterning, limb bud development, lung morphogenesis, osteogenesis and skin development. Plays an essential role in the regulation of osteoblast differentiation, proliferation and apoptosis, and is required for normal skeleton development. Promotes cell proliferation in keratinocytes and immature osteoblasts, but promotes apoptosis in differentiated osteoblasts. Phosphorylates PLCG1, FRS2 and PAK4. Ligand binding leads to the activation of several signaling cascades. Activation of PLCG1 leads to the production of the cellular signaling molecules diacylglycerol and inositol 1,4,5-trisphosphate. Phosphorylation of FRS2 triggers recruitment of GRB2, GAB1, PIK3R1 and SOS1, and mediates activation of RAS, MAPK1/ERK2, MAPK3/ERK1 and the MAP kinase signaling pathway, as well as of the AKT1 signaling pathway. FGFR2 signaling is down-regulated by ubiquitination, internalization and degradation. Mutations that lead to constitutive kinase activation or impair normal FGFR2 maturation, internalization and degradation lead to aberrant signaling. Over-expressed FGFR2 promotes activation of STAT1. The polypeptide is Fibroblast growth factor receptor 2 (fgfr2) (Danio rerio (Zebrafish)).